We begin with the raw amino-acid sequence, 261 residues long: 5'-nucleotidase SurE (261 aa).

Residues Asp-8, Asp-9, Ser-43, and Asn-96 each contribute to the a divalent metal cation site.

The protein belongs to the SurE nucleotidase family. A divalent metal cation serves as cofactor.

The protein localises to the cytoplasm. It catalyses the reaction a ribonucleoside 5'-phosphate + H2O = a ribonucleoside + phosphate. Functionally, nucleotidase that shows phosphatase activity on nucleoside 5'-monophosphates. This is 5'-nucleotidase SurE from Cereibacter sphaeroides (strain ATCC 17025 / ATH 2.4.3) (Rhodobacter sphaeroides).